Here is a 76-residue protein sequence, read N- to C-terminus: Acyl carrier protein (76 aa).

The Carrier domain occupies 2–76 (SSIFDKVKAI…SAVEYIKENQ (75 aa)). S36 bears the O-(pantetheine 4'-phosphoryl)serine mark.

The protein belongs to the acyl carrier protein (ACP) family. Post-translationally, 4'-phosphopantetheine is transferred from CoA to a specific serine of apo-ACP by AcpS. This modification is essential for activity because fatty acids are bound in thioester linkage to the sulfhydryl of the prosthetic group.

The protein resides in the cytoplasm. Its pathway is lipid metabolism; fatty acid biosynthesis. In terms of biological role, carrier of the growing fatty acid chain in fatty acid biosynthesis. This chain is Acyl carrier protein, found in Heliobacterium modesticaldum (strain ATCC 51547 / Ice1).